A 148-amino-acid chain; its full sequence is Glutamyl-tRNA(Gln) amidotransferase subunit C, mitochondrial (148 aa).

This sequence belongs to the GatC family. In terms of assembly, subunit of the heterotrimeric GatCAB amidotransferase (AdT) complex, composed of A, B and C subunits.

It localises to the mitochondrion. It catalyses the reaction L-glutamyl-tRNA(Gln) + L-glutamine + ATP + H2O = L-glutaminyl-tRNA(Gln) + L-glutamate + ADP + phosphate + H(+). Functionally, allows the formation of correctly charged Gln-tRNA(Gln) through the transamidation of misacylated Glu-tRNA(Gln) in the mitochondria. The reaction takes place in the presence of glutamine and ATP through an activated gamma-phospho-Glu-tRNA(Gln). The sequence is that of Glutamyl-tRNA(Gln) amidotransferase subunit C, mitochondrial from Drosophila melanogaster (Fruit fly).